We begin with the raw amino-acid sequence, 453 residues long: D-aminoacyl-tRNA deacylase (453 aa).

The tract at residues 428 to 453 (VRADVALHERPRERVRRPSDDEGKGN) is disordered.

The protein belongs to the DtdA deacylase family. Monomer. Zn(2+) serves as cofactor.

The catalysed reaction is a D-aminoacyl-tRNA + H2O = a tRNA + a D-alpha-amino acid + H(+). It catalyses the reaction glycyl-tRNA(Ala) + H2O = tRNA(Ala) + glycine + H(+). Its function is as follows. D-aminoacyl-tRNA deacylase with broad substrate specificity. By recycling D-aminoacyl-tRNA to D-amino acids and free tRNA molecules, this enzyme counteracts the toxicity associated with the formation of D-aminoacyl-tRNA entities in vivo. The sequence is that of D-aminoacyl-tRNA deacylase from Halobacterium salinarum (strain ATCC 29341 / DSM 671 / R1).